The primary structure comprises 581 residues: NADH-quinone oxidoreductase subunit C/D (581 aa).

Positions methionine 1–phenylalanine 172 are NADH dehydrogenase I subunit C. Residues glutamate 196–arginine 581 form an NADH dehydrogenase I subunit D region.

It in the N-terminal section; belongs to the complex I 30 kDa subunit family. In the C-terminal section; belongs to the complex I 49 kDa subunit family. NDH-1 is composed of 13 different subunits. Subunits NuoB, CD, E, F, and G constitute the peripheral sector of the complex.

It is found in the cell inner membrane. It catalyses the reaction a quinone + NADH + 5 H(+)(in) = a quinol + NAD(+) + 4 H(+)(out). Functionally, NDH-1 shuttles electrons from NADH, via FMN and iron-sulfur (Fe-S) centers, to quinones in the respiratory chain. The immediate electron acceptor for the enzyme in this species is believed to be ubiquinone. Couples the redox reaction to proton translocation (for every two electrons transferred, four hydrogen ions are translocated across the cytoplasmic membrane), and thus conserves the redox energy in a proton gradient. The chain is NADH-quinone oxidoreductase subunit C/D from Rhodopseudomonas palustris (strain BisA53).